We begin with the raw amino-acid sequence, 451 residues long: D-aminoacyl-tRNA deacylase (451 aa).

The tract at residues 410–437 (RTADIPEGPKFGKLASGESVEIDGEEID) is disordered.

Belongs to the DtdA deacylase family. In terms of assembly, monomer. Requires Zn(2+) as cofactor.

The catalysed reaction is a D-aminoacyl-tRNA + H2O = a tRNA + a D-alpha-amino acid + H(+). It carries out the reaction glycyl-tRNA(Ala) + H2O = tRNA(Ala) + glycine + H(+). Functionally, D-aminoacyl-tRNA deacylase with broad substrate specificity. By recycling D-aminoacyl-tRNA to D-amino acids and free tRNA molecules, this enzyme counteracts the toxicity associated with the formation of D-aminoacyl-tRNA entities in vivo. The polypeptide is D-aminoacyl-tRNA deacylase (Haloarcula marismortui (strain ATCC 43049 / DSM 3752 / JCM 8966 / VKM B-1809) (Halobacterium marismortui)).